Reading from the N-terminus, the 117-residue chain is Larval cuticle protein A2B (117 aa).

Copy 1 of the repeat occupies 12–15 (AAPV). A Chitin-binding type R&amp;R domain is found at 29 to 95 (HPQYQYGYDV…AVVHREPLVA (67 aa)). Repeat unit 2 spans residues 108–111 (AAPV).

Component of the cuticle of the larva of Tenebrio molitor. The polypeptide is Larval cuticle protein A2B (Tenebrio molitor (Yellow mealworm beetle)).